The sequence spans 135 residues: UPF0102 protein RPC_0320 (135 aa).

Belongs to the UPF0102 family.

The chain is UPF0102 protein RPC_0320 from Rhodopseudomonas palustris (strain BisB18).